A 444-amino-acid polypeptide reads, in one-letter code: Endoglucanase N (444 aa).

The signal sequence occupies residues 1 to 31; the sequence is MWMRRNQIVRKLTLGVVTTVLGMSLSFSALS. Residues histidine 64, 68–69, tyrosine 95, and histidine 130 contribute to the substrate site; that span reads WF. Glutamate 168 acts as the Proton donor in catalysis. Residue tyrosine 230 participates in substrate binding. The active-site Nucleophile is glutamate 256. Residues 262–263, tryptophan 290, and 295–297 each bind substrate; these read AS and KSE. The disordered stretch occupies residues 332 to 358; it reads ANLGGGDTPTTPTTPTEPTNPGNGTTG. Low complexity predominate over residues 339 to 358; sequence TPTTPTTPTEPTNPGNGTTG. Residues 356 to 444 form the CBM3 domain; the sequence is TTGDVVLQYR…DKANRYVLVT (89 aa).

Belongs to the glycosyl hydrolase 5 (cellulase A) family.

The protein resides in the secreted. The catalysed reaction is Endohydrolysis of (1-&gt;4)-beta-D-glucosidic linkages in cellulose, lichenin and cereal beta-D-glucans.. The chain is Endoglucanase N (celN) from Pectobacterium atrosepticum (Erwinia carotovora subsp. atroseptica).